The primary structure comprises 180 residues: Protein GrpE (180 aa).

Residues 1 to 25 form a disordered region; the sequence is MSKKKAEDKQPIIKDEAVEEPKSDS.

Belongs to the GrpE family. In terms of assembly, homodimer.

The protein resides in the cytoplasm. Its function is as follows. Participates actively in the response to hyperosmotic and heat shock by preventing the aggregation of stress-denatured proteins, in association with DnaK and GrpE. It is the nucleotide exchange factor for DnaK and may function as a thermosensor. Unfolded proteins bind initially to DnaJ; upon interaction with the DnaJ-bound protein, DnaK hydrolyzes its bound ATP, resulting in the formation of a stable complex. GrpE releases ADP from DnaK; ATP binding to DnaK triggers the release of the substrate protein, thus completing the reaction cycle. Several rounds of ATP-dependent interactions between DnaJ, DnaK and GrpE are required for fully efficient folding. This chain is Protein GrpE, found in Fructilactobacillus sanfranciscensis (Lactobacillus sanfranciscensis).